A 105-amino-acid chain; its full sequence is MAEWNGEYISPYAEHGKKSEQVKKITVSIPLKVLKILTDERTRRQVNNLRHATNSELLCEAFLHAFTGQPLPDDVDLRKERSDEIPEEAKAIMRAMGVDPDTWEY.

The protein belongs to the MetJ family. Homodimer.

Its subcellular location is the cytoplasm. Its function is as follows. This regulatory protein, when combined with SAM (S-adenosylmethionine) represses the expression of the methionine regulon and of enzymes involved in SAM synthesis. The polypeptide is Met repressor (Erwinia tasmaniensis (strain DSM 17950 / CFBP 7177 / CIP 109463 / NCPPB 4357 / Et1/99)).